The following is a 399-amino-acid chain: Acetate kinase (399 aa).

Asn7 is a Mg(2+) binding site. Lys14 is an ATP binding site. Arg90 lines the substrate pocket. The active-site Proton donor/acceptor is the Asp147. Residues 207 to 211, 282 to 284, and 330 to 334 contribute to the ATP site; these read HLGNG, DFR, and GIGEN. Residue Glu385 coordinates Mg(2+).

It belongs to the acetokinase family. Homodimer. It depends on Mg(2+) as a cofactor. The cofactor is Mn(2+).

It localises to the cytoplasm. It carries out the reaction acetate + ATP = acetyl phosphate + ADP. The protein operates within metabolic intermediate biosynthesis; acetyl-CoA biosynthesis; acetyl-CoA from acetate: step 1/2. Functionally, catalyzes the formation of acetyl phosphate from acetate and ATP. Can also catalyze the reverse reaction. In Caldicellulosiruptor bescii (strain ATCC BAA-1888 / DSM 6725 / KCTC 15123 / Z-1320) (Anaerocellum thermophilum), this protein is Acetate kinase.